Here is a 295-residue protein sequence, read N- to C-terminus: Protoheme IX farnesyltransferase (295 aa).

Transmembrane regions (helical) follow at residues V8–A28, Y35–F55, V74–I94, L98–I118, V132–A152, L162–F182, I208–A228, L233–A253, and F264–V284.

It belongs to the UbiA prenyltransferase family. Protoheme IX farnesyltransferase subfamily.

Its subcellular location is the cell inner membrane. It carries out the reaction heme b + (2E,6E)-farnesyl diphosphate + H2O = Fe(II)-heme o + diphosphate. It functions in the pathway porphyrin-containing compound metabolism; heme O biosynthesis; heme O from protoheme: step 1/1. Converts heme B (protoheme IX) to heme O by substitution of the vinyl group on carbon 2 of heme B porphyrin ring with a hydroxyethyl farnesyl side group. This Yersinia pseudotuberculosis serotype O:1b (strain IP 31758) protein is Protoheme IX farnesyltransferase.